A 466-amino-acid chain; its full sequence is Ribulose bisphosphate carboxylase large chain (466 aa).

Lys4 carries the N6,N6,N6-trimethyllysine modification. Asn113 and Thr163 together coordinate substrate. The active-site Proton acceptor is Lys165. Lys167 is a substrate binding site. Positions 191, 193, and 194 each coordinate Mg(2+). The residue at position 191 (Lys191) is an N6-carboxylysine. The Proton acceptor role is filled by His284. Positions 285, 317, and 369 each coordinate substrate.

This sequence belongs to the RuBisCO large chain family. Type I subfamily. As to quaternary structure, heterohexadecamer of 8 large chains and 8 small chains; disulfide-linked. The disulfide link is formed within the large subunit homodimers. It depends on Mg(2+) as a cofactor. In terms of processing, the disulfide bond which can form in the large chain dimeric partners within the hexadecamer appears to be associated with oxidative stress and protein turnover.

It localises to the plastid. Its subcellular location is the chloroplast. It carries out the reaction 2 (2R)-3-phosphoglycerate + 2 H(+) = D-ribulose 1,5-bisphosphate + CO2 + H2O. It catalyses the reaction D-ribulose 1,5-bisphosphate + O2 = 2-phosphoglycolate + (2R)-3-phosphoglycerate + 2 H(+). RuBisCO catalyzes two reactions: the carboxylation of D-ribulose 1,5-bisphosphate, the primary event in carbon dioxide fixation, as well as the oxidative fragmentation of the pentose substrate in the photorespiration process. Both reactions occur simultaneously and in competition at the same active site. The chain is Ribulose bisphosphate carboxylase large chain from Ruttya fruticosa (African azalea).